The chain runs to 111 residues: UPF0339 protein BP0521 (111 aa).

A run of 2 repeats spans residues 9–57 (ASGT…RYQR) and 60–108 (AKDG…TKDQ). Residues 86–111 (TQARDNGIASVKSNAPGAPTKDQTQA) are disordered.

The protein belongs to the UPF0339 family. Duplicated subfamily.

The protein is UPF0339 protein BP0521 of Bordetella pertussis (strain Tohama I / ATCC BAA-589 / NCTC 13251).